Here is a 353-residue protein sequence, read N- to C-terminus: Holliday junction branch migration complex subunit RuvB (353 aa).

The large ATPase domain (RuvB-L) stretch occupies residues 4 to 190; the sequence is TDKLQAPRVI…FGIVARLEFY (187 aa). Residues Leu29, Arg30, Gly71, Lys74, Thr75, Thr76, 137 to 139, Arg180, Tyr190, and Arg227 contribute to the ATP site; that span reads EDF. Position 75 (Thr75) interacts with Mg(2+). A small ATPAse domain (RuvB-S) region spans residues 191 to 261; that stretch reads TPHELAYIVG…VADAALLMLD (71 aa). A head domain (RuvB-H) region spans residues 264-353; sequence HLGLDLMDRK…DESAELFSAP (90 aa). DNA-binding residues include Arg319 and Arg324.

Belongs to the RuvB family. As to quaternary structure, homohexamer. Forms an RuvA(8)-RuvB(12)-Holliday junction (HJ) complex. HJ DNA is sandwiched between 2 RuvA tetramers; dsDNA enters through RuvA and exits via RuvB. An RuvB hexamer assembles on each DNA strand where it exits the tetramer. Each RuvB hexamer is contacted by two RuvA subunits (via domain III) on 2 adjacent RuvB subunits; this complex drives branch migration. In the full resolvosome a probable DNA-RuvA(4)-RuvB(12)-RuvC(2) complex forms which resolves the HJ.

It localises to the cytoplasm. It carries out the reaction ATP + H2O = ADP + phosphate + H(+). The RuvA-RuvB-RuvC complex processes Holliday junction (HJ) DNA during genetic recombination and DNA repair, while the RuvA-RuvB complex plays an important role in the rescue of blocked DNA replication forks via replication fork reversal (RFR). RuvA specifically binds to HJ cruciform DNA, conferring on it an open structure. The RuvB hexamer acts as an ATP-dependent pump, pulling dsDNA into and through the RuvAB complex. RuvB forms 2 homohexamers on either side of HJ DNA bound by 1 or 2 RuvA tetramers; 4 subunits per hexamer contact DNA at a time. Coordinated motions by a converter formed by DNA-disengaged RuvB subunits stimulates ATP hydrolysis and nucleotide exchange. Immobilization of the converter enables RuvB to convert the ATP-contained energy into a lever motion, pulling 2 nucleotides of DNA out of the RuvA tetramer per ATP hydrolyzed, thus driving DNA branch migration. The RuvB motors rotate together with the DNA substrate, which together with the progressing nucleotide cycle form the mechanistic basis for DNA recombination by continuous HJ branch migration. Branch migration allows RuvC to scan DNA until it finds its consensus sequence, where it cleaves and resolves cruciform DNA. In Aromatoleum aromaticum (strain DSM 19018 / LMG 30748 / EbN1) (Azoarcus sp. (strain EbN1)), this protein is Holliday junction branch migration complex subunit RuvB.